A 209-amino-acid polypeptide reads, in one-letter code: Ribonuclease HII (209 aa).

Residues 7–198 (GPVAGVDEAG…VAKAHQEWLH (192 aa)) enclose the RNase H type-2 domain. Residues aspartate 13, glutamate 14, and aspartate 107 each contribute to the a divalent metal cation site.

It belongs to the RNase HII family. It depends on Mn(2+) as a cofactor. Mg(2+) serves as cofactor.

Its subcellular location is the cytoplasm. It carries out the reaction Endonucleolytic cleavage to 5'-phosphomonoester.. In terms of biological role, endonuclease that specifically degrades the RNA of RNA-DNA hybrids. This Corynebacterium glutamicum (strain ATCC 13032 / DSM 20300 / JCM 1318 / BCRC 11384 / CCUG 27702 / LMG 3730 / NBRC 12168 / NCIMB 10025 / NRRL B-2784 / 534) protein is Ribonuclease HII.